The chain runs to 105 residues: Small ribosomal subunit protein uS10 (105 aa).

The protein belongs to the universal ribosomal protein uS10 family. As to quaternary structure, part of the 30S ribosomal subunit.

Its function is as follows. Involved in the binding of tRNA to the ribosomes. This chain is Small ribosomal subunit protein uS10, found in Cyanothece sp. (strain PCC 7425 / ATCC 29141).